The primary structure comprises 774 residues: 5-methyltetrahydropteroyltriglutamate--homocysteine methyltransferase (774 aa).

Residues 24-27 and Lys-120 each bind 5-methyltetrahydropteroyltri-L-glutamate; that span reads RELK. L-homocysteine contacts are provided by residues 446-448 and Glu-499; that span reads IGS. L-methionine contacts are provided by residues 446-448 and Glu-499; that span reads IGS. Trp-576 serves as a coordination point for 5-methyltetrahydropteroyltri-L-glutamate. Asp-614 contributes to the L-homocysteine binding site. Asp-614 is a binding site for L-methionine. Glu-620 serves as a coordination point for 5-methyltetrahydropteroyltri-L-glutamate. His-656, Cys-658, and Glu-680 together coordinate Zn(2+). His-709 serves as the catalytic Proton donor. A Zn(2+)-binding site is contributed by Cys-741.

Belongs to the vitamin-B12 independent methionine synthase family. The cofactor is Zn(2+).

It carries out the reaction 5-methyltetrahydropteroyltri-L-glutamate + L-homocysteine = tetrahydropteroyltri-L-glutamate + L-methionine. The protein operates within amino-acid biosynthesis; L-methionine biosynthesis via de novo pathway; L-methionine from L-homocysteine (MetE route): step 1/1. In terms of biological role, catalyzes the transfer of a methyl group from 5-methyltetrahydrofolate to homocysteine resulting in methionine formation. In Streptomyces griseus subsp. griseus (strain JCM 4626 / CBS 651.72 / NBRC 13350 / KCC S-0626 / ISP 5235), this protein is 5-methyltetrahydropteroyltriglutamate--homocysteine methyltransferase.